Consider the following 436-residue polypeptide: GTPase Der (436 aa).

EngA-type G domains lie at P4–E167 and I175–N351. GTP-binding positions include G10–S17, D57–I61, N119–D122, G181–S188, D229–M233, and N294–D297. The 85-residue stretch at K352–K436 folds into the KH-like domain.

Belongs to the TRAFAC class TrmE-Era-EngA-EngB-Septin-like GTPase superfamily. EngA (Der) GTPase family. Associates with the 50S ribosomal subunit.

In terms of biological role, GTPase that plays an essential role in the late steps of ribosome biogenesis. The sequence is that of GTPase Der from Streptococcus agalactiae serotype Ia (strain ATCC 27591 / A909 / CDC SS700).